We begin with the raw amino-acid sequence, 793 residues long: Facilitated trehalose transporter Tret1 (793 aa).

Residues 1–326 lie on the Cytoplasmic side of the membrane; the sequence is MNRKVGPVLE…LEVYRPTTNP (326 aa). Disordered regions lie at residues 99–148 and 213–235; these read EKAK…EHKS and RHIS…FEPS. Over residues 104 to 113 the composition is skewed to low complexity; the sequence is KSSLKSSRVS. Residues 115–125 show a composition bias toward acidic residues; the sequence is DQEDDRFDEDE. Basic and acidic residues predominate over residues 213-223; sequence RHISFKFDKEP. Residues 327–347 traverse the membrane as a helical segment; that stretch reads IYIWTQVLAALSVSLGSMVVG. At 348–376 the chain is on the extracellular side; the sequence is FSSAYTSPALVSMKDRNITSFEVTDQSGS. An N-linked (GlcNAc...) asparagine glycan is attached at asparagine 364. Residues 377–397 form a helical membrane-spanning segment; sequence WVGGIMPLAGLAGGILGGPMI. Topologically, residues 398 to 411 are cytoplasmic; sequence EYLGRKNTILATAT. A helical transmembrane segment spans residues 412–432; that stretch reads PFIISWLLIGCATHVAMVLVG. The Extracellular segment spans residues 433-434; it reads RA. Residues 435-455 traverse the membrane as a helical segment; that stretch reads LSGLCVGIASLSLPVYLGETV. The Cytoplasmic segment spans residues 456-460; that stretch reads QPEVR. A helical membrane pass occupies residues 461-481; the sequence is GTLGLLPTAFGNIGILLCFVA. The Extracellular segment spans residues 482 to 488; that stretch reads GKYLDWS. The chain crosses the membrane as a helical span at residues 489-509; sequence GLAFLGAALPIPFLLLMFLIP. The Cytoplasmic portion of the chain corresponds to 510-572; that stretch reads ETPRWYVSRN…DLLNKANLKP (63 aa). A helical transmembrane segment spans residues 573–593; it reads LLISLGLMFFQQLSGINAVIF. Residues 594 to 609 are Extracellular-facing; that stretch reads YTVQIFQSAGSTIDEK. A helical membrane pass occupies residues 610 to 630; sequence LCTIIVGVVNFIATFIATVLI. The Cytoplasmic portion of the chain corresponds to 631 to 636; sequence DRLGRK. Residues 637–657 traverse the membrane as a helical segment; that stretch reads ILLYISDVAMIITLMTLGTFF. Residues 658–668 are Extracellular-facing; that stretch reads YMKNNGDDVSE. Residues 669-689 form a helical membrane-spanning segment; the sequence is IGWLPLAAFVVFVVGFSLGFG. At 690 to 703 the chain is on the cytoplasmic side; the sequence is PIPWLMMGEILPGK. The helical transmembrane segment at 704–724 threads the bilayer; it reads IRGSAASVATAFNWSCTFVVT. Over 725-737 the chain is Extracellular; the sequence is KTFADITASIGNH. Residues 738–758 form a helical membrane-spanning segment; sequence GAFWMFGSICIVGLLFVIVYV. Residues 759-793 are Cytoplasmic-facing; it reads PETQGKSLEDIERKMMGRVRRMSSVANIKPLSFNM.

The protein belongs to the major facilitator superfamily. Sugar transporter (TC 2.A.1.1) family. Trehalose transporter subfamily.

It localises to the cell membrane. High-capacity facilitative transporter for trehalose. Does not transport maltose, sucrose or lactose. Mediates the bidirectional transfer of trehalose. Responsible for the transport of trehalose synthesized in the fat body and the incorporation of trehalose into other tissues that require a carbon source, thereby regulating trehalose levels in the hemolymph. The chain is Facilitated trehalose transporter Tret1 from Anopheles gambiae (African malaria mosquito).